Reading from the N-terminus, the 114-residue chain is NLP effector protein 1 (114 aa).

This sequence belongs to the Necrosis inducing protein (NPP1) family.

The protein localises to the secreted. It localises to the host cytoplasm. Its function is as follows. Probable secreted effector that may act as a pathogen-associated molecular pattern (PAMP) recognized by the plant immune system. Seems not to induce necrosis, neither in several susceptible or resistant Vitis species nor in the dicot model plant Nicotiana benthamiana. The sequence is that of NLP effector protein 1 from Plasmopara viticola (Downy mildew of grapevine).